The chain runs to 98 residues: NADH-ubiquinone oxidoreductase chain 4L (98 aa).

3 helical membrane passes run 1–21, 29–49, and 61–81; these read MSIT…GLLL, SLLC…MIIL, and IILL…LVMV.

This sequence belongs to the complex I subunit 4L family. In terms of assembly, core subunit of respiratory chain NADH dehydrogenase (Complex I) which is composed of 45 different subunits.

It localises to the mitochondrion inner membrane. The enzyme catalyses a ubiquinone + NADH + 5 H(+)(in) = a ubiquinol + NAD(+) + 4 H(+)(out). In terms of biological role, core subunit of the mitochondrial membrane respiratory chain NADH dehydrogenase (Complex I) which catalyzes electron transfer from NADH through the respiratory chain, using ubiquinone as an electron acceptor. Part of the enzyme membrane arm which is embedded in the lipid bilayer and involved in proton translocation. The protein is NADH-ubiquinone oxidoreductase chain 4L (MT-ND4L) of Platyrrhinus dorsalis (Thomas's broad-nosed bat).